Here is a 100-residue protein sequence, read N- to C-terminus: Large ribosomal subunit protein uL23 (100 aa).

This sequence belongs to the universal ribosomal protein uL23 family. Part of the 50S ribosomal subunit. Contacts protein L29, and trigger factor when it is bound to the ribosome.

One of the early assembly proteins it binds 23S rRNA. One of the proteins that surrounds the polypeptide exit tunnel on the outside of the ribosome. Forms the main docking site for trigger factor binding to the ribosome. This chain is Large ribosomal subunit protein uL23, found in Colwellia psychrerythraea (strain 34H / ATCC BAA-681) (Vibrio psychroerythus).